The following is a 521-amino-acid chain: Probable rhamnogalacturonase B (521 aa).

A signal peptide spans methionine 1–alanine 21. A disulfide bond links cysteine 42 and cysteine 68. A glycan (N-linked (GlcNAc...) asparagine) is linked at asparagine 145. Aspartate 219 (proton donor) is an active-site residue. Cysteine 221 and cysteine 238 are disulfide-bonded. N-linked (GlcNAc...) asparagine glycosylation is present at asparagine 239. Histidine 294 is an active-site residue. The N-linked (GlcNAc...) asparagine glycan is linked to asparagine 321. Cystine bridges form between cysteine 344-cysteine 350 and cysteine 372-cysteine 381. The tract at residues glutamate 462–isoleucine 521 is disordered. Residues arginine 469–proline 486 are compositionally biased toward polar residues. Residues proline 507 to isoleucine 521 are compositionally biased toward basic residues.

This sequence belongs to the glycosyl hydrolase 28 family.

The protein resides in the secreted. It carries out the reaction Endohydrolysis of alpha-D-GalA-(1-&gt;2)-alpha-L-Rha glycosidic bond in the rhamnogalacturonan I backbone with initial inversion of anomeric configuration releasing oligosaccharides with beta-D-GalA at the reducing end.. Its function is as follows. Pectinolytic enzymes consist of four classes of enzymes: pectine lyase, polygalacturonase, pectin methylesterase and rhamnogalacturonase. Hydrolyzes alpha-D-galacturonopyranosyl-(1,2)-alpha-L-rhamnopyranosyl linkages in the backbone of the hairy regions of pectins. This Aspergillus fumigatus (strain ATCC MYA-4609 / CBS 101355 / FGSC A1100 / Af293) (Neosartorya fumigata) protein is Probable rhamnogalacturonase B (rhgB).